The primary structure comprises 210 residues: Leucyl/phenylalanyl-tRNA--protein transferase (210 aa).

The protein belongs to the L/F-transferase family.

Its subcellular location is the cytoplasm. The enzyme catalyses N-terminal L-lysyl-[protein] + L-leucyl-tRNA(Leu) = N-terminal L-leucyl-L-lysyl-[protein] + tRNA(Leu) + H(+). The catalysed reaction is N-terminal L-arginyl-[protein] + L-leucyl-tRNA(Leu) = N-terminal L-leucyl-L-arginyl-[protein] + tRNA(Leu) + H(+). It carries out the reaction L-phenylalanyl-tRNA(Phe) + an N-terminal L-alpha-aminoacyl-[protein] = an N-terminal L-phenylalanyl-L-alpha-aminoacyl-[protein] + tRNA(Phe). In terms of biological role, functions in the N-end rule pathway of protein degradation where it conjugates Leu, Phe and, less efficiently, Met from aminoacyl-tRNAs to the N-termini of proteins containing an N-terminal arginine or lysine. This is Leucyl/phenylalanyl-tRNA--protein transferase from Ruegeria sp. (strain TM1040) (Silicibacter sp.).